The primary structure comprises 430 residues: Enolase (430 aa).

Residue Gln167 participates in (2R)-2-phosphoglycerate binding. The active-site Proton donor is Glu209. Residues Asp246, Glu287, and Asp314 each contribute to the Mg(2+) site. Positions 339, 368, 369, and 390 each coordinate (2R)-2-phosphoglycerate. The Proton acceptor role is filled by Lys339.

It belongs to the enolase family. The cofactor is Mg(2+).

The protein localises to the cytoplasm. It localises to the secreted. It is found in the cell surface. It catalyses the reaction (2R)-2-phosphoglycerate = phosphoenolpyruvate + H2O. The protein operates within carbohydrate degradation; glycolysis; pyruvate from D-glyceraldehyde 3-phosphate: step 4/5. Catalyzes the reversible conversion of 2-phosphoglycerate (2-PG) into phosphoenolpyruvate (PEP). It is essential for the degradation of carbohydrates via glycolysis. This chain is Enolase, found in Prochlorococcus marinus (strain MIT 9515).